Consider the following 379-residue polypeptide: Fimbrium subunit Fim1C (379 aa).

The first 17 residues, 1 to 17 (MEVKSLLMVMATLTIAG), serve as a signal peptide directing secretion. A lipid anchor (N-palmitoyl cysteine) is attached at Cys18. The S-diacylglycerol cysteine moiety is linked to residue Cys18. Residues 18-45 (CSQNEMTEMNPDTNRTIGLDVYTEVQTR) constitute a propeptide that is removed on maturation.

This sequence belongs to the bacteroidetes fimbrillin superfamily. Mfa-like family. As to quaternary structure, may be part of the fimbrial tip.

Its subcellular location is the fimbrium. It is found in the cell outer membrane. Its function is as follows. Probably a component of the fimbrium tip. Fimbriae are filamentous appendages on the cell surface that mediate cell adhesion and biofilm formation. This is Fimbrium subunit Fim1C (fim1C) from Phocaeicola vulgatus (strain ATCC 8482 / DSM 1447 / JCM 5826 / CCUG 4940 / NBRC 14291 / NCTC 11154) (Bacteroides vulgatus).